The following is a 223-amino-acid chain: Alpha-S2-casein (223 aa).

Positions Met-1 to Ala-15 are cleaved as a signal peptide. Ser-23, Ser-24, Ser-25, Ser-72, Ser-73, Ser-74, Ser-77, Ser-145, Ser-147, Ser-151, and Ser-159 each carry phosphoserine. A repeat spans Ser-77–Arg-141. The segment at residues Ser-159 to Leu-223 is a repeat.

The protein belongs to the alpha-casein family. In terms of tissue distribution, mammary gland specific. Secreted in milk.

The protein localises to the secreted. Its function is as follows. Important role in the capacity of milk to transport calcium phosphate. The chain is Alpha-S2-casein (CSN1S2) from Capra hircus (Goat).